We begin with the raw amino-acid sequence, 90 residues long: Protein S100-A6 (90 aa).

EF-hand domains follow at residues 12–47 and 48–83; these read LVAI…IGSK and LQDA…LALI. Ca(2+) contacts are provided by T28 and E33. Residue K40 is modified to N6-acetyllysine. At S46 the chain carries Phosphoserine. Residue K47 is modified to N6-acetyllysine; alternate. K47 is modified (N6-succinyllysine; alternate). Ca(2+) is bound by residues D61, N63, D65, E67, and E72.

This sequence belongs to the S-100 family. As to quaternary structure, homodimer; head to tail assembly of 2 subunits. Interacts with CACYBP in a calcium-dependent manner. Interacts with ANXA2 and ANXA11 (via N-terminus). Interacts with SUGT1. Interacts with TP53; has higher affinity for TP53 that is phosphorylated on its N-terminal domain, and lower affinity for TP53 that is phosphorylated on its C-terminal domain. Interacts with tropomyosin. Interacts with FKBP4. Interacts with PPP5C (via TPR repeats); the interaction is calcium-dependent and modulates PPP5C activity. Interacts with TPPP; this interaction inhibits TPPP dimerization. In terms of processing, the N-terminus is blocked.

Its subcellular location is the nucleus envelope. The protein resides in the cytoplasm. It is found in the cell membrane. May function as calcium sensor and modulator, contributing to cellular calcium signaling. May function by interacting with other proteins, such as TPR-containing proteins, and indirectly play a role in many physiological processes such as the reorganization of the actin cytoskeleton and in cell motility. Binds 2 calcium ions. Calcium binding is cooperative. The protein is Protein S100-A6 (S100A6) of Homo sapiens (Human).